The chain runs to 160 residues: MPFFYVPGVGLSTLEQKLTEMITAPVEALGYELVGIEFIRGRTSTLRIYIDSEDGITVDDCADVSHQVSSVLDVEDPITVAYNLEVSSPGLDRPLFTAEHYARYTGEEVTLVLRMAVQNRRKWQGIIKAVDGEMITVAVDGKDEVFALSNIQRANLVPQF.

It belongs to the RimP family.

Its subcellular location is the cytoplasm. Required for maturation of 30S ribosomal subunits. The chain is Ribosome maturation factor RimP from Cronobacter sakazakii (strain ATCC BAA-894) (Enterobacter sakazakii).